Consider the following 453-residue polypeptide: Prenyltransferase nscD (453 aa).

Residues arginine 118, lysine 200, tyrosine 202, lysine 271, tyrosine 273, and tyrosine 428 each contribute to the dimethylallyl diphosphate site.

Belongs to the tryptophan dimethylallyltransferase family.

It functions in the pathway secondary metabolite biosynthesis. Functionally, prenyltransferase; part of the gene cluster that mediates the biosynthesis of neosartoricin, a prenylated anthracenone that exhibits T-cell antiproliferative activity, suggestive of a physiological role as an immunosuppressive agent. The non-reducing polyketide synthase nscA probably synthesizes and cyclizes the decaketide backbone. The hydrolase nscB then mediates the product release through hydrolysis followed by spontaneous decarboxylation. The prenyltransferase nscD catalyzes the addition of the dimethylallyl group to the aromatic C5. The FAD-dependent monooxygenase nscC is then responsible for the stereospecific hydroxylation at C2. There is no gene encoding O-acetyltransferase in the nsc gene cluster; thus, the last step of 2-O-acetylation leading to neosartoricin may be catalyzed by an unidentified O-acetyltransferase. This is Prenyltransferase nscD from Aspergillus fumigatus (strain ATCC MYA-4609 / CBS 101355 / FGSC A1100 / Af293) (Neosartorya fumigata).